The primary structure comprises 216 residues: uncharacterized protein (216 aa).

This is an uncharacterized protein from Escherichia coli (strain K12).